Consider the following 237-residue polypeptide: Oligoribonuclease, mitochondrial (237 aa).

A mitochondrion-targeting transit peptide spans 1 to 25 (MLGVSLGARLLRGVGGRRGQFGARG). The region spanning 43 to 207 (MVWVDLEMTG…DDISESIKEL (165 aa)) is the Exonuclease domain. Residues D47 and E49 each coordinate Mg(2+). S92 is modified (phosphoserine). Y122 carries the post-translational modification Phosphotyrosine. D147 contributes to the Mg(2+) binding site. K173 bears the N6-acetyllysine mark. H194 is a catalytic residue. D199 serves as a coordination point for Mg(2+).

The protein belongs to the oligoribonuclease family. Homodimer. Homotetramer. Requires Mn(2+) as cofactor. Mg(2+) serves as cofactor.

It localises to the mitochondrion intermembrane space. It is found in the mitochondrion matrix. The protein localises to the mitochondrion. Its subcellular location is the cytoplasm. The protein resides in the nucleus. Functionally, 3'-to-5'exoribonuclease that preferentially degrades DNA and RNA oligonucleotides composed of only two nucleotides. Binds and degrades longer oligonucleotides with a lower affinity. Plays dual roles in mitochondria, scavenging nanoRNAs (small RNA oligonucleotides of &lt;5 nucleotides) that are produced by the degradosome and clearing short RNAs that are generated by RNA processing. Essential for correct initiation of mitochondrial transcription, degrading mitochondrial RNA dinucleotides to prevent RNA-primed transcription at non-canonical sites in the mitochondrial genome. Essential for embryonic development. The sequence is that of Oligoribonuclease, mitochondrial (Rexo2) from Mus musculus (Mouse).